A 432-amino-acid polypeptide reads, in one-letter code: ATP-dependent RNA helicase RhlB (432 aa).

A Q motif motif is present at residues 9-37; that stretch reads KKFSDFALHPKVIEALEKKGFSNCTQIQA. One can recognise a Helicase ATP-binding domain in the interval 40-219; the sequence is LPITVKGHDI…FEQMNNPEYV (180 aa). Position 53-60 (53-60) interacts with ATP; sequence AQTGTGKT. The short motif at 165 to 168 is the DEAD box element; sequence DEAD. Residues 245 to 390 form the Helicase C-terminal domain; it reads RLLQTLIEEE…VSKYNSDALL (146 aa). Residues 393-432 are disordered; sequence LPEPKRRHRPRQGQPRRNNSAPRRGNNTQRNNRNKRPSHS. The span at 404 to 423 shows a compositional bias: low complexity; the sequence is QGQPRRNNSAPRRGNNTQRN.

This sequence belongs to the DEAD box helicase family. RhlB subfamily. As to quaternary structure, component of the RNA degradosome, which is a multiprotein complex involved in RNA processing and mRNA degradation.

Its subcellular location is the cytoplasm. The enzyme catalyses ATP + H2O = ADP + phosphate + H(+). DEAD-box RNA helicase involved in RNA degradation. Has RNA-dependent ATPase activity and unwinds double-stranded RNA. This Proteus mirabilis (strain HI4320) protein is ATP-dependent RNA helicase RhlB.